We begin with the raw amino-acid sequence, 244 residues long: Fumarate reductase iron-sulfur subunit (244 aa).

Y14 contacts a menaquinone. In terms of domain architecture, 2Fe-2S ferredoxin-type spans 16–97; the sequence is PEVDTAPHSA…GMKVEALANF (82 aa). Residues C58, C63, C66, and C78 each coordinate [2Fe-2S] cluster. A 4Fe-4S ferredoxin-type domain is found at 140-169; sequence MAKYHQFSGCINCGLCYAACPQFGLNPEFI. The [4Fe-4S] cluster site is built by C149, C152, and C155. 3 residues coordinate [3Fe-4S] cluster: C159, C205, and C211. C215 provides a ligand contact to [4Fe-4S] cluster. Residue 226 to 229 participates in a menaquinone binding; that stretch reads QQGK.

This sequence belongs to the succinate dehydrogenase/fumarate reductase iron-sulfur protein family. As to quaternary structure, fumarate dehydrogenase forms part of an enzyme complex containing four subunits: a flavoprotein, an iron-sulfur, and two hydrophobic anchor proteins. [2Fe-2S] cluster is required as a cofactor. The cofactor is [3Fe-4S] cluster. It depends on [4Fe-4S] cluster as a cofactor.

It localises to the cell inner membrane. The catalysed reaction is a quinone + succinate = fumarate + a quinol. It catalyses the reaction a menaquinone + succinate = a menaquinol + fumarate. Its function is as follows. Two distinct, membrane-bound, FAD-containing enzymes are responsible for the catalysis of fumarate and succinate interconversion; the fumarate reductase is used in anaerobic growth, and the succinate dehydrogenase is used in aerobic growth. This chain is Fumarate reductase iron-sulfur subunit (frdB), found in Escherichia coli O157:H7.